We begin with the raw amino-acid sequence, 136 residues long: MARVTVEDCIEQIPNRFELVLLAAQRARNLSRGASITIDRDNDKNPVVALREIADSTVDFGGLEQDLVKSLSRVPDPEPADEEVQDLIPTDQNIFGLQDVSAEEEAAAMAAESEEMTSEDIAAAIEAELGGGRPRR.

Belongs to the RNA polymerase subunit omega family. As to quaternary structure, the RNAP catalytic core consists of 2 alpha, 1 beta, 1 beta' and 1 omega subunit. When a sigma factor is associated with the core the holoenzyme is formed, which can initiate transcription.

The enzyme catalyses RNA(n) + a ribonucleoside 5'-triphosphate = RNA(n+1) + diphosphate. Its function is as follows. Promotes RNA polymerase assembly. Latches the N- and C-terminal regions of the beta' subunit thereby facilitating its interaction with the beta and alpha subunits. In Acidiphilium cryptum (strain JF-5), this protein is DNA-directed RNA polymerase subunit omega.